A 101-amino-acid polypeptide reads, in one-letter code: Apolipoprotein C-II (101 aa).

An N-terminal signal peptide occupies residues 1 to 22 (MGIRYLLVLVLVLLVLGCEVQG). Residues 23 to 28 (AHMPQQ) constitute a propeptide that is removed on maturation. Residues 66-74 (TMDEKIREI) are lipid binding. The segment at 78–101 (STAAVSTYAGIFTDQLLSMLKGDQ) is lipoprotein lipase cofactor.

This sequence belongs to the apolipoprotein C2 family. Proapolipoprotein C-II is synthesized as a sialic acid containing glycoprotein which is subsequently desialylated prior to its proteolytic processing. Post-translationally, proapolipoprotein C-II, the major form found in plasma undergoes proteolytic cleavage of its N-terminal hexapeptide to generate apolipoprotein C-II, which occurs as the minor form in plasma.

Its subcellular location is the secreted. Functionally, component of chylomicrons, very low-density lipoproteins (VLDL), low-density lipoproteins (LDL), and high-density lipoproteins (HDL) in plasma. Plays an important role in lipoprotein metabolism as an activator of lipoprotein lipase. Both proapolipoprotein C-II and apolipoprotein C-II can activate lipoprotein lipase. The protein is Apolipoprotein C-II (APOC2) of Neomonachus schauinslandi (Hawaiian monk seal).